A 257-amino-acid chain; its full sequence is Adenylate kinase (257 aa).

Gly-52–Thr-57 is a binding site for ATP. The interval Ala-72–Val-101 is NMP. Residues Thr-73, Arg-78, Gly-99–Val-101, Gly-128–Arg-131, and Gln-135 each bind AMP. The LID stretch occupies residues Gly-169–Asp-206. ATP-binding positions include Arg-170 and Ser-179–Tyr-180. The AMP site is built by Arg-203 and Arg-214. Position 242 (Gln-242) interacts with ATP.

Belongs to the adenylate kinase family. AK2 subfamily. Monomer.

It localises to the cytoplasm. Its subcellular location is the cytosol. It is found in the mitochondrion intermembrane space. It catalyses the reaction AMP + ATP = 2 ADP. Its function is as follows. Catalyzes the reversible transfer of the terminal phosphate group between ATP and AMP. Plays an important role in cellular energy homeostasis and in adenine nucleotide metabolism. Adenylate kinase activity is critical for regulation of the phosphate utilization and the AMP de novo biosynthesis pathways. This Neosartorya fischeri (strain ATCC 1020 / DSM 3700 / CBS 544.65 / FGSC A1164 / JCM 1740 / NRRL 181 / WB 181) (Aspergillus fischerianus) protein is Adenylate kinase (adk1).